The sequence spans 131 residues: uncharacterized protein (131 aa).

This is an uncharacterized protein from Acanthamoeba polyphaga (Amoeba).